The sequence spans 71 residues: Conotoxin Vc6.12 (71 aa).

Residues 1–19 (MQKLIILLLVAAVLMSTQA) form the signal peptide. Positions 20–43 (LFQEKRPMKKINFLSKGKTDAEKQ) are excised as a propeptide. 3 cysteine pairs are disulfide-bonded: C48-C62, C55-C66, and C61-C70.

The protein belongs to the conotoxin O2 superfamily. Expressed by the venom duct.

The protein localises to the secreted. Functionally, inhibits voltage-gated ion channels. This is Conotoxin Vc6.12 from Conus victoriae (Queen Victoria cone).